The sequence spans 231 residues: Ribosomal RNA small subunit methyltransferase G (231 aa).

S-adenosyl-L-methionine-binding positions include Gly-75, Phe-80, 126 to 127 (AE), and Arg-142.

This sequence belongs to the methyltransferase superfamily. RNA methyltransferase RsmG family.

It localises to the cytoplasm. Its function is as follows. Specifically methylates the N7 position of a guanine in 16S rRNA. This chain is Ribosomal RNA small subunit methyltransferase G, found in Mycoplasma capricolum subsp. capricolum (strain California kid / ATCC 27343 / NCTC 10154).